Here is a 209-residue protein sequence, read N- to C-terminus: Molybdenum cofactor guanylyltransferase (209 aa).

GTP-binding positions include 16 to 18 (LAG), Lys28, Asn56, Asp69, and Asp103. Asp103 contributes to the Mg(2+) binding site.

The protein belongs to the MobA family. In terms of assembly, monomer. Mg(2+) is required as a cofactor.

Its subcellular location is the cytoplasm. It catalyses the reaction Mo-molybdopterin + GTP + H(+) = Mo-molybdopterin guanine dinucleotide + diphosphate. Transfers a GMP moiety from GTP to Mo-molybdopterin (Mo-MPT) cofactor (Moco or molybdenum cofactor) to form Mo-molybdopterin guanine dinucleotide (Mo-MGD) cofactor. The protein is Molybdenum cofactor guanylyltransferase of Rhizobium johnstonii (strain DSM 114642 / LMG 32736 / 3841) (Rhizobium leguminosarum bv. viciae).